Consider the following 353-residue polypeptide: Protein RecA (353 aa).

ATP is bound at residue 75–82; sequence GPESSGKT.

It belongs to the RecA family.

The protein resides in the cytoplasm. In terms of biological role, can catalyze the hydrolysis of ATP in the presence of single-stranded DNA, the ATP-dependent uptake of single-stranded DNA by duplex DNA, and the ATP-dependent hybridization of homologous single-stranded DNAs. It interacts with LexA causing its activation and leading to its autocatalytic cleavage. The protein is Protein RecA of Cupriavidus pinatubonensis (strain JMP 134 / LMG 1197) (Cupriavidus necator (strain JMP 134)).